The primary structure comprises 72 residues: Sec-independent protein translocase protein TatA (72 aa).

The chain crosses the membrane as a helical span at residues 1 to 21; that stretch reads MPFGLGLPEILVIGVIALLIF. Positions 41 to 72 are disordered; the sequence is KSGVSDEPAPQQSASKETAPNPPQSLPSGKDS.

It belongs to the TatA/E family. As to quaternary structure, forms a complex with TatC.

Its subcellular location is the cell inner membrane. In terms of biological role, part of the twin-arginine translocation (Tat) system that transports large folded proteins containing a characteristic twin-arginine motif in their signal peptide across membranes. TatA could form the protein-conducting channel of the Tat system. This chain is Sec-independent protein translocase protein TatA, found in Gloeobacter violaceus (strain ATCC 29082 / PCC 7421).